A 159-amino-acid chain; its full sequence is Large ribosomal subunit protein uL10 (159 aa).

The protein belongs to the universal ribosomal protein uL10 family. Part of the ribosomal stalk of the 50S ribosomal subunit. The N-terminus interacts with L11 and the large rRNA to form the base of the stalk. The C-terminus forms an elongated spine to which L12 dimers bind in a sequential fashion forming a multimeric L10(L12)X complex.

Its function is as follows. Forms part of the ribosomal stalk, playing a central role in the interaction of the ribosome with GTP-bound translation factors. In Nautilia profundicola (strain ATCC BAA-1463 / DSM 18972 / AmH), this protein is Large ribosomal subunit protein uL10.